Consider the following 198-residue polypeptide: Large ribosomal subunit protein uL13 (198 aa).

This sequence belongs to the universal ribosomal protein uL13 family.

The polypeptide is Large ribosomal subunit protein uL13 (RPL13A) (Tetrahymena thermophila (strain SB210)).